Consider the following 453-residue polypeptide: MVAVAILAAGRGTRMKSNLPKVLHRLGGYSLVERVLNSCQLLNPSRQLVIIGYEGEQVRDSLQQLDSLEFVEQKEQLGTGHAIQQLLPHLEGFQGDLLVLNGDVPLLRPQTLENLLNIHKTHRNAATLLTAHLPNPKGYGRVFCDNNNLVTQIVEDRDCNAAQKQNHRINGGIYCFNWQQLAAVLPKLSADNDQKEYYLTDVVKFLAPVMAVDVEDYLEITGINDRKQLAMANGILQNRVKDHWMAQGVTLIDPDSITIDDTVELQTDVIIEPQTHLRGKTSIGKGSRLGPGSLIENSHIGDNVTVLYSVITESQVASGCRVGPYSHLRGQAQIGESCRIGNFVEIKKSVIEQKSNVAHLSYLGDATLGEQVNVGAGTITANYDGVQKHRTIIGKGTKTGANSVFVAPVTLGEEVTVAAGSVVTHDVPDRALVIARQRQRIIEEWKKTIESKK.

A pyrophosphorylase region spans residues 1-226; the sequence is MVAVAILAAG…YLEITGINDR (226 aa). UDP-N-acetyl-alpha-D-glucosamine-binding positions include 7-10, Lys-21, Gln-73, and 78-79; these read LAAG and GT. Mg(2+) is bound at residue Asp-103. Gly-140, Glu-155, Asn-170, and Asn-224 together coordinate UDP-N-acetyl-alpha-D-glucosamine. Asn-224 contributes to the Mg(2+) binding site. The linker stretch occupies residues 227–247; the sequence is KQLAMANGILQNRVKDHWMAQ. An N-acetyltransferase region spans residues 248–453; sequence GVTLIDPDSI…EWKKTIESKK (206 aa). Residues Arg-329 and Lys-347 each coordinate UDP-N-acetyl-alpha-D-glucosamine. The active-site Proton acceptor is His-359. Residues Tyr-362 and Asn-373 each coordinate UDP-N-acetyl-alpha-D-glucosamine. Acetyl-CoA is bound by residues Ala-376, 382 to 383, Ala-419, and Arg-436; that span reads NY.

It in the N-terminal section; belongs to the N-acetylglucosamine-1-phosphate uridyltransferase family. In the C-terminal section; belongs to the transferase hexapeptide repeat family. Homotrimer. The cofactor is Mg(2+).

The protein localises to the cytoplasm. The catalysed reaction is alpha-D-glucosamine 1-phosphate + acetyl-CoA = N-acetyl-alpha-D-glucosamine 1-phosphate + CoA + H(+). It catalyses the reaction N-acetyl-alpha-D-glucosamine 1-phosphate + UTP + H(+) = UDP-N-acetyl-alpha-D-glucosamine + diphosphate. Its pathway is nucleotide-sugar biosynthesis; UDP-N-acetyl-alpha-D-glucosamine biosynthesis; N-acetyl-alpha-D-glucosamine 1-phosphate from alpha-D-glucosamine 6-phosphate (route II): step 2/2. It participates in nucleotide-sugar biosynthesis; UDP-N-acetyl-alpha-D-glucosamine biosynthesis; UDP-N-acetyl-alpha-D-glucosamine from N-acetyl-alpha-D-glucosamine 1-phosphate: step 1/1. It functions in the pathway bacterial outer membrane biogenesis; LPS lipid A biosynthesis. In terms of biological role, catalyzes the last two sequential reactions in the de novo biosynthetic pathway for UDP-N-acetylglucosamine (UDP-GlcNAc). The C-terminal domain catalyzes the transfer of acetyl group from acetyl coenzyme A to glucosamine-1-phosphate (GlcN-1-P) to produce N-acetylglucosamine-1-phosphate (GlcNAc-1-P), which is converted into UDP-GlcNAc by the transfer of uridine 5-monophosphate (from uridine 5-triphosphate), a reaction catalyzed by the N-terminal domain. In Rippkaea orientalis (strain PCC 8801 / RF-1) (Cyanothece sp. (strain PCC 8801)), this protein is Bifunctional protein GlmU.